Reading from the N-terminus, the 240-residue chain is Enolase-phosphatase E1 (240 aa).

This sequence belongs to the HAD-like hydrolase superfamily. MasA/MtnC family. As to quaternary structure, monomer. Mg(2+) is required as a cofactor.

It catalyses the reaction 5-methylsulfanyl-2,3-dioxopentyl phosphate + H2O = 1,2-dihydroxy-5-(methylsulfanyl)pent-1-en-3-one + phosphate. It participates in amino-acid biosynthesis; L-methionine biosynthesis via salvage pathway; L-methionine from S-methyl-5-thio-alpha-D-ribose 1-phosphate: step 3/6. It functions in the pathway amino-acid biosynthesis; L-methionine biosynthesis via salvage pathway; L-methionine from S-methyl-5-thio-alpha-D-ribose 1-phosphate: step 4/6. In terms of biological role, bifunctional enzyme that catalyzes the enolization of 2,3-diketo-5-methylthiopentyl-1-phosphate (DK-MTP-1-P) into the intermediate 2-hydroxy-3-keto-5-methylthiopentenyl-1-phosphate (HK-MTPenyl-1-P), which is then dephosphorylated to form the acireductone 1,2-dihydroxy-3-keto-5-methylthiopentene (DHK-MTPene). This chain is Enolase-phosphatase E1, found in Saccharopolyspora erythraea (strain ATCC 11635 / DSM 40517 / JCM 4748 / NBRC 13426 / NCIMB 8594 / NRRL 2338).